Reading from the N-terminus, the 630-residue chain is Internalin B (630 aa).

A signal peptide spans 1–30; that stretch reads MKEKHNPRRKYCLISGLAIIFSLWIIIGNG. In terms of domain architecture, LRRNT spans 31–76; it reads AKVQAETITVSTPIKQIFPDDAFAETIKDNLKKKSVTDAVTQNELN. Residues P49, D51, E55, and D59 each coordinate Ca(2+). 7 LRR repeats span residues 75–97, 98–121, 123–141, 142–163, 164–187, 189–207, and 208–231; these read LNSI…IQYL, PNVT…NLKN, GWLF…LKDL, KKLK…LVHL, PQLE…RLTK, DTLS…LAGL, and TKLQ…GLKN. Residues 241–319 form an ig-like region region; it reads ECLNKPINHQ…RFHGRVTQPL (79 aa). The LRRCT domain occupies 241–330; sequence ECLNKPINHQ…EVYTVSYDVD (90 aa). Residues 320-392 are b repeat region; sequence KEVYTVSYDV…TLYAVFKAET (73 aa). 3 GW domains span residues 393-467, 472-550, and 553-630; these read TEKT…LDRY, YDKG…TFYK, and MEKP…RAQK. Residues 399–630 form a GW repeat region, necessary and sufficient for cell surface attachment, interacts with host C1QBP and with heparin region; the sequence is LTRYVKYIRG…TKAANLRAQK (232 aa).

This sequence belongs to the internalin family. As to quaternary structure, monomer. Interacts via its LRR repeats with the extracellular portion of mammalian host MET; MET can bind HGF, its endogenous ligand, and InlB simultaneously. Probably forms a dimer upon interaction with host MET, which subsequently allows dimerization of the host MET and subsequent host signaling; dimerization probably occurs via the convex surface of InlB. Interacts with host complement component 1 Q subcomponent-binding protein (C1QBP). Interacts in vitro with human intestinal mucin-2 (MUC2) but not with mucin-1. The cofactor is Ca(2+).

Its subcellular location is the secreted. The protein resides in the cell surface. It localises to the cell membrane. Its function is as follows. Mediates the entry of L.monocytogenes into normally non-phagocytic mammalian host cells. Its host receptor is hepatocyte growth factor receptor (HGF receptor, a tyrosine kinase, MET) which is tyrosine-phosphorylated in response to InlB in human, green monkey, mouse and dog cell lines. Downstream adapter proteins GAB1 and CBL are phosphorylated in response to InlB, which also causes cell colony scattering. InlB binding to mammalian cells is saturable and inhibited by EDTA; InlB-coated beads can be taken up by host cells. Complement component 1 Q subcomponent-binding protein (gC1q-R, C1QBP) might act as an InlB receptor, leading to activation of PI3-kinase in green monkey cells. Stimulation of Tyr-phosphorylation by InlB is antagonized by C1QBP, showing that potentiation of MET signaling via the GW domains is not mediated by C1QBP; the exact role of C1QBP remains to be determined. Stimulation of Tyr-phosphorylation of MET by InlB is potentiated by the InlB GW domains and glycosaminoglycans such as heparin; exogenously added InlB, or hepatocyte growth factor (HGF) will also substitute for bacterial InlB, suggesting InlB promotes bacterial invasion by mimicking the hormone HGF. May stimulate phosphatidylinositol 4,5-bisphosphate 3-kinase (PI3-kinase) in green monkey cells, has less effect in humans as PI3-kinase is constitutively and highly expressed in Caco cells. Binds heparin; C1QBP and heparin seem to bind to the GW domains. This is Internalin B (inlB) from Listeria monocytogenes serotype 1/2a (strain EGD / Mackaness).